The following is a 67-amino-acid chain: uncharacterized protein (67 aa).

This is an uncharacterized protein from Fowlpox virus (strain NVSL) (FPV).